The sequence spans 318 residues: Small ribosomal subunit biogenesis GTPase RsgA (318 aa).

Over residues 1–16 (MTRGKPGRAGHDRRHA) the composition is skewed to basic residues. The segment at 1 to 21 (MTRGKPGRAGHDRRHASTGEH) is disordered. Residues 84–249 (SDQFKSKQLA…LIDSPGFQEF (166 aa)) form the CP-type G domain. GTP-binding positions include 133–136 (NKID) and 187–195 (GQSGMGKSS). Zn(2+) is bound by residues Cys273, Cys278, His280, and Cys286.

The protein belongs to the TRAFAC class YlqF/YawG GTPase family. RsgA subfamily. As to quaternary structure, monomer. Associates with 30S ribosomal subunit, binds 16S rRNA. The cofactor is Zn(2+).

It is found in the cytoplasm. One of several proteins that assist in the late maturation steps of the functional core of the 30S ribosomal subunit. Helps release RbfA from mature subunits. May play a role in the assembly of ribosomal proteins into the subunit. Circularly permuted GTPase that catalyzes slow GTP hydrolysis, GTPase activity is stimulated by the 30S ribosomal subunit. The chain is Small ribosomal subunit biogenesis GTPase RsgA from Ralstonia nicotianae (strain ATCC BAA-1114 / GMI1000) (Ralstonia solanacearum).